The following is a 243-amino-acid chain: 3-deoxy-manno-octulosonate cytidylyltransferase (243 aa).

This sequence belongs to the KdsB family.

It is found in the cytoplasm. It catalyses the reaction 3-deoxy-alpha-D-manno-oct-2-ulosonate + CTP = CMP-3-deoxy-beta-D-manno-octulosonate + diphosphate. Its pathway is nucleotide-sugar biosynthesis; CMP-3-deoxy-D-manno-octulosonate biosynthesis; CMP-3-deoxy-D-manno-octulosonate from 3-deoxy-D-manno-octulosonate and CTP: step 1/1. It functions in the pathway bacterial outer membrane biogenesis; lipopolysaccharide biosynthesis. Activates KDO (a required 8-carbon sugar) for incorporation into bacterial lipopolysaccharide in Gram-negative bacteria. The protein is 3-deoxy-manno-octulosonate cytidylyltransferase of Helicobacter pylori (strain HPAG1).